The primary structure comprises 295 residues: Ribosomal RNA small subunit methyltransferase A (295 aa).

Asn-29, Leu-31, Gly-56, Glu-77, Asp-102, and Asn-128 together coordinate S-adenosyl-L-methionine.

Belongs to the class I-like SAM-binding methyltransferase superfamily. rRNA adenine N(6)-methyltransferase family. RsmA subfamily.

The protein resides in the cytoplasm. The catalysed reaction is adenosine(1518)/adenosine(1519) in 16S rRNA + 4 S-adenosyl-L-methionine = N(6)-dimethyladenosine(1518)/N(6)-dimethyladenosine(1519) in 16S rRNA + 4 S-adenosyl-L-homocysteine + 4 H(+). Functionally, specifically dimethylates two adjacent adenosines (A1518 and A1519) in the loop of a conserved hairpin near the 3'-end of 16S rRNA in the 30S particle. May play a critical role in biogenesis of 30S subunits. This is Ribosomal RNA small subunit methyltransferase A from Listeria innocua serovar 6a (strain ATCC BAA-680 / CLIP 11262).